Here is a 470-residue protein sequence, read N- to C-terminus: MSTNQGSLWGGRFAAGPSEALVALSKSTHFDWVLAPYDITASRAHTKMLFRAGLLNEEQRDGLLAGLDNLAEDVADGSFLPLVTDEDVHAALERGLIDRVGPDLGGRLRAGRSRNDQVATLFRMWLRDAVRRVAAGALEVVDALANQAAEHSSTIMPGKTHLQSAQPILLAHHLLAHAHPLLRDVGRIVDFDKRAAVSPYGSGALAGSSLGLDPDAMAQDLGFPAAADNSVDATAARDFAAEAAFVFAMIAVDLSRLAEDIILWSSTEFGYARLHDSWSTGSSIMPQKKNPDIAELARGKSGRLIGNLAGLLATLKAQPLAYNRDLQEDKEPVFDSVAQLELLLPAMAGLVASLTFNVERMAALAPAGYTLATDIAEWLVRQGVPFRSAHEAAGTAVRVAEGRGVGLEELTDDELAAISANLTPQVREVLTVEGSVSSRAARGGTAPSQAAKQLTVVRANANQLRQLLMR.

It belongs to the lyase 1 family. Argininosuccinate lyase subfamily.

Its subcellular location is the cytoplasm. It carries out the reaction 2-(N(omega)-L-arginino)succinate = fumarate + L-arginine. It participates in amino-acid biosynthesis; L-arginine biosynthesis; L-arginine from L-ornithine and carbamoyl phosphate: step 3/3. The polypeptide is Argininosuccinate lyase (Mycobacterium leprae (strain Br4923)).